The following is a 370-amino-acid chain: Cytochrome b (370 aa).

Helical transmembrane passes span 25–45 (FGSM…FLAI), 69–90 (WIMQ…YTHI), 105–125 (WLSG…GYVL), and 170–190 (FFAL…IHIV). Residues histidine 75 and histidine 89 each contribute to the heme b site. Residues histidine 174 and histidine 188 each contribute to the heme b site. Histidine 193 is a binding site for a ubiquinone. A run of 4 helical transmembrane segments spans residues 218-238 (YKDM…MSFM), 280-300 (LGGT…PFTH), 312-332 (LTQI…WTAT), and 339-358 (FITI…IINP).

The protein belongs to the cytochrome b family. The cytochrome bc1 complex contains 3 respiratory subunits (MT-CYB, CYC1 and UQCRFS1), 2 core proteins (UQCRC1 and UQCRC2) and probably 6 low-molecular weight proteins. It depends on heme b as a cofactor.

The protein resides in the mitochondrion inner membrane. In terms of biological role, component of the ubiquinol-cytochrome c reductase complex (complex III or cytochrome b-c1 complex) that is part of the mitochondrial respiratory chain. The b-c1 complex mediates electron transfer from ubiquinol to cytochrome c. Contributes to the generation of a proton gradient across the mitochondrial membrane that is then used for ATP synthesis. The sequence is that of Cytochrome b (MT-CYB) from Micropechis ikaheca (New Guinean small-eyed snake).